A 304-amino-acid chain; its full sequence is Protein INO2 (304 aa).

The bHLH domain occupies 236–290; that stretch reads VRKWKHVQMEKIRRINTKEAFERLIKSVRTPPKENGKRIPKHILLTCVMNDIKSI.

Efficient DNA binding requires dimerization with another bHLH protein.

Its subcellular location is the nucleus. Positive regulatory factor required for depression of the coregulated phospholipid biosynthetic enzymes. Also involved in the expression of ITR1. The protein is Protein INO2 (INO2) of Saccharomyces cerevisiae (strain ATCC 204508 / S288c) (Baker's yeast).